The following is a 955-amino-acid chain: Valine--tRNA ligase (955 aa).

The 'HIGH' region signature appears at 41–51 (PNITGSLHMGH). The 'KMSKS' region motif lies at 554–558 (KMSKS). Position 557 (Lys-557) interacts with ATP. Residues 926-946 (QEKNKLLKLNEINLKLSEQIK) adopt a coiled-coil conformation.

Belongs to the class-I aminoacyl-tRNA synthetase family. ValS type 1 subfamily. As to quaternary structure, monomer.

The protein localises to the cytoplasm. The enzyme catalyses tRNA(Val) + L-valine + ATP = L-valyl-tRNA(Val) + AMP + diphosphate. In terms of biological role, catalyzes the attachment of valine to tRNA(Val). As ValRS can inadvertently accommodate and process structurally similar amino acids such as threonine, to avoid such errors, it has a 'posttransfer' editing activity that hydrolyzes mischarged Thr-tRNA(Val) in a tRNA-dependent manner. The sequence is that of Valine--tRNA ligase from Buchnera aphidicola subsp. Acyrthosiphon pisum (strain APS) (Acyrthosiphon pisum symbiotic bacterium).